The primary structure comprises 936 residues: Protocadherin alpha-5 (936 aa).

A signal peptide spans 1-28 (MVYSRRGSLGSRLLLLWLLLAYWKAGSG). The Extracellular segment spans residues 29–696 (QLHYSIPEEA…GPEAALVDVN (668 aa)). 6 Cadherin domains span residues 33 to 132 (SIPE…PPRF), 156 to 241 (ASDL…APEF), 242 to 349 (DKSI…TPEM), 350 to 454 (AITT…APAF), 455 to 564 (AQPQ…APAL), and 580 to 677 (VPRS…APKA). N264 carries N-linked (GlcNAc...) asparagine glycosylation. N547 is a glycosylation site (N-linked (GlcNAc...) asparagine). Residues 697 to 717 (VYLIIAICAVSSLLVLTLLLY) form a helical membrane-spanning segment. Topologically, residues 718–936 (TALRCSAQPT…GNSTTDNSDQ (219 aa)) are cytoplasmic. Disordered regions lie at residues 759–793 (SGEA…PDWR) and 816–936 (AGPG…NSDQ). 5 PXXP repeats span residues 773-776 (PSLP), 785-788 (PRQP), 818-821 (PGGP), 873-876 (KFII), and 877-890 (PGSP…QEPT). The interval 773–890 (PSLPQGPTST…AIISIRQEPT (118 aa)) is 5 X 4 AA repeats of P-X-X-P. Positions 774-786 (SLPQGPTSTDNPR) are enriched in polar residues. Residues 895–909 (DKSDFITFGKKEETK) are compositionally biased toward basic and acidic residues.

The protein resides in the cell membrane. Its function is as follows. Potential calcium-dependent cell-adhesion protein. May be involved in the establishment and maintenance of specific neuronal connections in the brain. The polypeptide is Protocadherin alpha-5 (PCDHA5) (Homo sapiens (Human)).